Reading from the N-terminus, the 209-residue chain is GTP-binding protein RHB1 (209 aa).

Met-1 carries the N-acetylmethionine modification. Residues Gly-28, Lys-29, Thr-30, Thr-31, Val-42, Tyr-45, Thr-48, Asp-132, and Ala-172 each contribute to the GTP site. A Mg(2+)-binding site is contributed by Thr-30. The short motif at Tyr-45–Phe-53 is the Effector region element. Thr-48 is a Mg(2+) binding site. Cys-206 carries the post-translational modification Cysteine methyl ester. Cys-206 carries the S-farnesyl cysteine lipid modification. A propeptide spans Ser-207–Met-209 (removed in mature form).

The protein belongs to the small GTPase superfamily. Rheb family. In terms of assembly, interacts with BTN2.

It localises to the cell membrane. The catalysed reaction is GTP + H2O = GDP + phosphate + H(+). Its function is as follows. Binds GTP and exhibits intrinsic GTPase activity. Involved in the regulation of arginine and lysine uptake. Acts through the CAN1 permease. The protein is GTP-binding protein RHB1 (RHB1) of Saccharomyces cerevisiae (strain ATCC 204508 / S288c) (Baker's yeast).